Reading from the N-terminus, the 76-residue chain is Small ribosomal subunit protein bS18 (76 aa).

Belongs to the bacterial ribosomal protein bS18 family. As to quaternary structure, part of the 30S ribosomal subunit. Forms a tight heterodimer with protein bS6.

Functionally, binds as a heterodimer with protein bS6 to the central domain of the 16S rRNA, where it helps stabilize the platform of the 30S subunit. In Oceanobacillus iheyensis (strain DSM 14371 / CIP 107618 / JCM 11309 / KCTC 3954 / HTE831), this protein is Small ribosomal subunit protein bS18.